We begin with the raw amino-acid sequence, 177 residues long: Ubiquitin-conjugating enzyme E2 C (177 aa).

The segment at 1–31 (MSGQNIDPAANQVRQKERPRDMTTSKERHSV) is disordered. Residues 14-30 (RQKERPRDMTTSKERHS) show a composition bias toward basic and acidic residues. The 146-residue stretch at 30-175 (SVSKRLQQEL…LHEKYKTAQS (146 aa)) folds into the UBC core domain. Catalysis depends on cysteine 114, which acts as the Glycyl thioester intermediate.

This sequence belongs to the ubiquitin-conjugating enzyme family. Component of the APC/C complex. In terms of processing, autoubiquitinated by the APC/C complex, leading to its degradation by the proteasome.

The catalysed reaction is S-ubiquitinyl-[E1 ubiquitin-activating enzyme]-L-cysteine + [E2 ubiquitin-conjugating enzyme]-L-cysteine = [E1 ubiquitin-activating enzyme]-L-cysteine + S-ubiquitinyl-[E2 ubiquitin-conjugating enzyme]-L-cysteine.. The enzyme catalyses S-ubiquitinyl-[E1 ubiquitin-activating enzyme]-L-cysteine + [acceptor protein]-L-lysine = [E1 ubiquitin-activating enzyme]-L-cysteine + N(6)-monoubiquitinyl-[acceptor protein]-L-lysine.. It functions in the pathway protein modification; protein ubiquitination. Its function is as follows. Catalyzes the covalent attachment of ubiquitin to other proteins. Acts as an essential factor of the anaphase promoting complex/cyclosome (APC/C), a cell cycle-regulated ubiquitin ligase that is essential for the transition from metaphase to anaphase in mitosis. Involved in both degradation of proteins responsible for maintaining sister chromatid cohesion at the onset of anaphase and of mitotic cyclins A and B at the exit of mitosis. Acts by initiating polyubiquitin chains on APC/C substrates, leading to the degradation of APC/C substrates by the proteasome and promoting mitotic exit. In Spisula solidissima (Atlantic surf-clam), this protein is Ubiquitin-conjugating enzyme E2 C (UBE2C).